Consider the following 271-residue polypeptide: 3-methyl-2-oxobutanoate hydroxymethyltransferase (271 aa).

Mg(2+) contacts are provided by Asp51 and Asp90. 3-methyl-2-oxobutanoate-binding positions include 51–52, Asp90, and Lys118; that span reads DS. Mg(2+) is bound at residue Glu120. Catalysis depends on Glu186, which acts as the Proton acceptor.

It belongs to the PanB family. In terms of assembly, homodecamer; pentamer of dimers. The cofactor is Mg(2+).

The protein resides in the cytoplasm. It carries out the reaction 3-methyl-2-oxobutanoate + (6R)-5,10-methylene-5,6,7,8-tetrahydrofolate + H2O = 2-dehydropantoate + (6S)-5,6,7,8-tetrahydrofolate. It participates in cofactor biosynthesis; (R)-pantothenate biosynthesis; (R)-pantoate from 3-methyl-2-oxobutanoate: step 1/2. In terms of biological role, catalyzes the reversible reaction in which hydroxymethyl group from 5,10-methylenetetrahydrofolate is transferred onto alpha-ketoisovalerate to form ketopantoate. The protein is 3-methyl-2-oxobutanoate hydroxymethyltransferase of Xanthomonas euvesicatoria pv. vesicatoria (strain 85-10) (Xanthomonas campestris pv. vesicatoria).